The sequence spans 344 residues: Uroporphyrinogen decarboxylase (344 aa).

Substrate contacts are provided by residues 23–27 (RQAGR), Asp73, Tyr149, Thr204, and His321.

It belongs to the uroporphyrinogen decarboxylase family. As to quaternary structure, homodimer.

Its subcellular location is the cytoplasm. The enzyme catalyses uroporphyrinogen III + 4 H(+) = coproporphyrinogen III + 4 CO2. It functions in the pathway porphyrin-containing compound metabolism; protoporphyrin-IX biosynthesis; coproporphyrinogen-III from 5-aminolevulinate: step 4/4. Catalyzes the decarboxylation of four acetate groups of uroporphyrinogen-III to yield coproporphyrinogen-III. This is Uroporphyrinogen decarboxylase from Francisella tularensis subsp. mediasiatica (strain FSC147).